A 314-amino-acid polypeptide reads, in one-letter code: Hydrolase 4 (314 aa).

Positions 73–75 (HGA) match the Involved in the stabilization of the negatively charged intermediate by the formation of the oxyanion hole motif. Residues Ser165 and Asp260 contribute to the active site.

The protein belongs to the 'GDXG' lipolytic enzyme family.

Its pathway is alkaloid biosynthesis. Component of the seco-iridoid and derivatives monoterpenoid indole alkaloids (MIAs, e.g. vincadifformine) biosynthesis pathway. Catalyzes the conversion of O-acetylstemmadenine (OAS) to vincadifformine. May also trigger the formation of additional unknown MIAs. The chain is Hydrolase 4 from Catharanthus roseus (Madagascar periwinkle).